A 106-amino-acid polypeptide reads, in one-letter code: Nucleoid-associated protein Rpal_0620 (106 aa).

It belongs to the YbaB/EbfC family. In terms of assembly, homodimer.

It localises to the cytoplasm. Its subcellular location is the nucleoid. In terms of biological role, binds to DNA and alters its conformation. May be involved in regulation of gene expression, nucleoid organization and DNA protection. The sequence is that of Nucleoid-associated protein Rpal_0620 from Rhodopseudomonas palustris (strain TIE-1).